We begin with the raw amino-acid sequence, 37 residues long: Potassium channel toxin alpha-KTx 2.14 (37 aa).

Intrachain disulfides connect cysteine 7–cysteine 28, cysteine 13–cysteine 33, and cysteine 17–cysteine 35.

Belongs to the short scorpion toxin superfamily. Potassium channel inhibitor family. Alpha-KTx 02 subfamily. Expressed by the venom gland.

It localises to the secreted. Reversibly blocks hKv1.1/KCNA1 (50% inhibition of current at 1 uM). Seems not to be voltage-dependent. In Heteroctenus garridoi (Cuban scorpion), this protein is Potassium channel toxin alpha-KTx 2.14.